The sequence spans 646 residues: MLSVAQSSALFLLQAICILYITKLTIPTPVSEINLVRQSDCVCVPIISRSGTDYITCFNNCQIEPINTKLYNSTCTKMVNITLVRCNNEVYVMTLPNLVSNRSHSWEVLINYLLRFISAIIVYLLLSISKQGIFLFFSIVHYSFKFIKNKKSCNICGNDFYFIHIDCPKPDFTKRSDFHMMFYIILFLSLFFVVTHADDNVYNYYEHGDLTEIQLLDKEHYSQDFVSDGFLYNFYVENSHLIYDISNISTITRPVKHNEVTSTWSCDGSSGCYKDHVGKYNKKPDYVLKKVHDGFSCFFTTATICGTCKSEHIAIGDHVRVINVKPYIHIVVKTANKTDKIVIDEFNKFIHEPYYIKPITQIHIDQHDFLVTGSKVYQGTFCERPSKSCFGPNYITSDKTVTLHEPKIRDTFTHDREYIIDYCDYPSNSDLESLELTDMVHHSDKIYSPYDFGLISIGIPKLGYLAGGFCESLVSVKKIEVYGCYDCQNGVKISVTYESSDSCHTLICKHDSTTHRYFVQQHTTTLNFHSFMSKKDTIIECNQMRKALNLDESSETSVYFESNGVKGSAKEPVNFDFIKNLLYIDYKKIIFVFLVAIISIGIFLRSPYMLLSSILKFRKRRKVVATNRSEQLVMDDDVDVFIGPPS.

An N-terminal signal peptide occupies residues 1 to 25 (MLSVAQSSALFLLQAICILYITKLT). Residues 26-119 (IPTPVSEINL…INYLLRFISA (94 aa)) are Lumenal-facing. Asn72, Asn80, and Asn101 each carry an N-linked (GlcNAc...) asparagine; by host glycan. A helical membrane pass occupies residues 120–140 (IIVYLLLSISKQGIFLFFSIV). The Cytoplasmic portion of the chain corresponds to 141-176 (HYSFKFIKNKKSCNICGNDFYFIHIDCPKPDFTKRS). A helical membrane pass occupies residues 177-197 (DFHMMFYIILFLSLFFVVTHA). At 198–588 (DDNVYNYYEH…KNLLYIDYKK (391 aa)) the chain is on the lumenal side. Asn247 and Asn336 each carry an N-linked (GlcNAc...) asparagine; by host glycan. Residues 589–609 (IIFVFLVAIISIGIFLRSPYM) traverse the membrane as a helical segment. Topologically, residues 610–646 (LLSSILKFRKRRKVVATNRSEQLVMDDDVDVFIGPPS) are cytoplasmic.

As to quaternary structure, G2 and G1 interact with each other. In terms of processing, specific enzymatic cleavages in vivo yield mature proteins including glycoprotein G1 and glycoprotein G2. Glycosylated. Glycosylation is essential for proper subcellular location.

Its subcellular location is the virion membrane. The protein resides in the host Golgi apparatus membrane. Its function is as follows. Glycoprotein G2 and glycoprotein G1 interact with each other and are present at the surface of the virion. They are able to attach the virion to a cell receptor and to promote fusion of membranes after endocytosis of the virion. This is Envelope glycoprotein from European mountain ash ringspot-associated virus (isolate Sorbus aucuparia) (EMARAV).